The primary structure comprises 150 residues: PTTG1IP family member 2 (150 aa).

An N-terminal signal peptide occupies residues 1–19 (MCWLRAWSHILLPVFLSVA). The Extracellular segment spans residues 20–98 (LIQLIFNLSD…SIFWANCNVD (79 aa)). A glycan (N-linked (GlcNAc...) asparagine) is linked at asparagine 26. Residues 99–119 (LFGIVMLILIVILALAFLWYC) form a helical membrane-spanning segment. Residues 120 to 150 (LAYYFYMQQHMALYARHGQVPVYNWDAPGDW) lie on the Cytoplasmic side of the membrane.

It is found in the membrane. The protein is PTTG1IP family member 2 of Mus musculus (Mouse).